The chain runs to 262 residues: LysM and putative peptidoglycan-binding domain-containing protein 3 (262 aa).

At 1 to 218 the chain is on the extracellular side; the sequence is MSGRIPNHGY…PYHGADWSLG (218 aa). A LysM domain is found at 70–114; that stretch reads ISRDICEGDTLNSIALQYCCTVADLKRANNFLNEQDFFALRTIKI. The chain crosses the membrane as a helical span at residues 219–239; sequence WWTAVAIMVFVGIITPLFYFL. Residues 240-262 are Cytoplasmic-facing; the sequence is YYEVLMKVNTSHTLNSIEKSGPS.

The protein localises to the cell membrane. The protein resides in the golgi apparatus. Functionally, essential for Golgi structural integrity. This Xenopus tropicalis (Western clawed frog) protein is LysM and putative peptidoglycan-binding domain-containing protein 3 (lysmd3).